We begin with the raw amino-acid sequence, 339 residues long: UDP-N-acetylenolpyruvoylglucosamine reductase (339 aa).

Residues 19 to 189 form the FAD-binding PCMH-type domain; sequence VDVQARLFAQ…LRVRFKLSRE (171 aa). The active site involves Arg-166. Ser-239 acts as the Proton donor in catalysis. Glu-335 is a catalytic residue.

It belongs to the MurB family. FAD serves as cofactor.

It localises to the cytoplasm. It carries out the reaction UDP-N-acetyl-alpha-D-muramate + NADP(+) = UDP-N-acetyl-3-O-(1-carboxyvinyl)-alpha-D-glucosamine + NADPH + H(+). It functions in the pathway cell wall biogenesis; peptidoglycan biosynthesis. In terms of biological role, cell wall formation. The polypeptide is UDP-N-acetylenolpyruvoylglucosamine reductase (Pseudomonas syringae pv. tomato (strain ATCC BAA-871 / DC3000)).